Consider the following 130-residue polypeptide: Small ribosomal subunit protein uS11 (130 aa).

It belongs to the universal ribosomal protein uS11 family. As to quaternary structure, part of the 30S ribosomal subunit. Interacts with proteins S7 and S18. Binds to IF-3.

Functionally, located on the platform of the 30S subunit, it bridges several disparate RNA helices of the 16S rRNA. Forms part of the Shine-Dalgarno cleft in the 70S ribosome. The polypeptide is Small ribosomal subunit protein uS11 (Campylobacter hominis (strain ATCC BAA-381 / DSM 21671 / CCUG 45161 / LMG 19568 / NCTC 13146 / CH001A)).